Consider the following 560-residue polypeptide: SET domain-containing protein 4 (560 aa).

Disordered stretches follow at residues 1 to 61 (MTSP…PSPQ) and 125 to 157 (KKQN…AEDN). Residues 26–38 (SRSSSYSSNSSMS) are compositionally biased toward low complexity. Over residues 47–59 (LSVSSAASETLPS) the composition is skewed to polar residues. Residues 141-157 (ESSKENKITPSMRAEDN) show a composition bias toward basic and acidic residues. The PHD-type zinc-finger motif lies at 160–210 (KNGCICGSSDSKDELFIQCNKCKTWQHKLCYAFKKSDPIKRDFVCKRCDSD). The SET domain maps to 346-475 (ADIEVRKSSN…KGEEISVEWQ (130 aa)).

It belongs to the SET3 family.

Functionally, putative chromatin regulator. The polypeptide is SET domain-containing protein 4 (SET4) (Saccharomyces cerevisiae (strain ATCC 204508 / S288c) (Baker's yeast)).